We begin with the raw amino-acid sequence, 420 residues long: 3-oxo-tetronate kinase (420 aa).

ATP contacts are provided by residues serine 258, 360–363, and glycine 403; that span reads GGET.

Belongs to the four-carbon acid sugar kinase family.

The catalysed reaction is 3-dehydro-L-erythronate + ATP = 3-dehydro-4-O-phospho-L-erythronate + ADP + H(+). It catalyses the reaction 3-dehydro-D-erythronate + ATP = 3-dehydro-4-O-phospho-D-erythronate + ADP + H(+). In terms of biological role, catalyzes the ATP-dependent phosphorylation of 3-oxo-tetronate to 3-oxo-tetronate 4-phosphate. The protein is 3-oxo-tetronate kinase of Salmonella typhimurium (strain LT2 / SGSC1412 / ATCC 700720).